The primary structure comprises 87 residues: U3-theraphotoxin-Hhn1f (87 aa).

The N-terminal stretch at 1–24 (MVNMKASMFLTSAGLVLLFVVCYA) is a signal peptide. The propeptide occupies 25-52 (SESEEKEFPKEMLSSIFAVDNDFKQEER). 3 disulfides stabilise this stretch: Cys54-Cys67, Cys61-Cys72, and Cys66-Cys79.

It belongs to the neurotoxin 10 (Hwtx-1) family. 51 (Hntx-8) subfamily. Hntx-8 sub-subfamily. As to expression, expressed by the venom gland.

It localises to the secreted. Its function is as follows. Ion channel inhibitor. The sequence is that of U3-theraphotoxin-Hhn1f from Cyriopagopus hainanus (Chinese bird spider).